The primary structure comprises 267 residues: Undecaprenyl-diphosphatase (267 aa).

8 helical membrane-spanning segments follow: residues 4–24 (ILII…PISS), 41–61 (NIQN…ILLF), 84–104 (ILIL…GFMF), 116–136 (YISY…FISL), 160–180 (CFSL…GLIL), 185–205 (YVLF…VLIL), 216–236 (ENIF…LIFG), and 246–266 (TSLI…LFTC).

The protein belongs to the UppP family.

It localises to the cell membrane. It carries out the reaction di-trans,octa-cis-undecaprenyl diphosphate + H2O = di-trans,octa-cis-undecaprenyl phosphate + phosphate + H(+). Functionally, catalyzes the dephosphorylation of undecaprenyl diphosphate (UPP). Confers resistance to bacitracin. The chain is Undecaprenyl-diphosphatase from Wigglesworthia glossinidia brevipalpis.